The primary structure comprises 115 residues: Putative gamma-glutamylcyclotransferase VC_2546 (115 aa).

Substrate is bound at residue Tyr-8–Leu-11. The active-site Proton acceptor is Glu-73.

This sequence belongs to the gamma-glutamylcyclotransferase family.

In terms of biological role, putative gamma-glutamylcyclotransferase. In Vibrio cholerae serotype O1 (strain ATCC 39315 / El Tor Inaba N16961), this protein is Putative gamma-glutamylcyclotransferase VC_2546.